A 147-amino-acid polypeptide reads, in one-letter code: Large ribosomal subunit protein uL15 (147 aa).

Residues 1-57 (MKLHELKSAPKSRNHKAKVVGRGHGSGLGKTSGRGQKGQKARKSGRTRPGFEGGQTP) form a disordered region. Over residues 10–21 (PKSRNHKAKVVG) the composition is skewed to basic residues. Residues 22–36 (RGHGSGLGKTSGRGQ) are compositionally biased toward gly residues. Positions 37 to 46 (KGQKARKSGR) are enriched in basic residues.

It belongs to the universal ribosomal protein uL15 family. In terms of assembly, part of the 50S ribosomal subunit.

Binds to the 23S rRNA. The polypeptide is Large ribosomal subunit protein uL15 (Mycoplasmoides gallisepticum (strain R(low / passage 15 / clone 2)) (Mycoplasma gallisepticum)).